Reading from the N-terminus, the 161-residue chain is uncharacterized protein (161 aa).

2 disordered regions span residues 1–67 and 80–147; these read MNSN…IQNF and DSHQ…KKKQ. Residues 84-126 show a composition bias toward low complexity; the sequence is NFNDNGFNNNNNNNNSNMNHNFSNQNNYNNNNNNNNNNNSNFN. Over residues 135–147 the composition is skewed to polar residues; the sequence is GTSSQVGNNKKKQ.

This is an uncharacterized protein from Dictyostelium discoideum (Social amoeba).